The following is a 194-amino-acid chain: Peptidyl-tRNA hydrolase (194 aa).

Tyrosine 16 contacts tRNA. Histidine 21 serves as the catalytic Proton acceptor. TRNA-binding residues include phenylalanine 67, asparagine 69, and asparagine 115.

The protein belongs to the PTH family. As to quaternary structure, monomer.

It localises to the cytoplasm. It catalyses the reaction an N-acyl-L-alpha-aminoacyl-tRNA + H2O = an N-acyl-L-amino acid + a tRNA + H(+). Its function is as follows. Hydrolyzes ribosome-free peptidyl-tRNAs (with 1 or more amino acids incorporated), which drop off the ribosome during protein synthesis, or as a result of ribosome stalling. Functionally, catalyzes the release of premature peptidyl moieties from peptidyl-tRNA molecules trapped in stalled 50S ribosomal subunits, and thus maintains levels of free tRNAs and 50S ribosomes. The protein is Peptidyl-tRNA hydrolase of Shigella dysenteriae serotype 1 (strain Sd197).